The following is a 580-amino-acid chain: Probable inositol transporter 3 (580 aa).

12 helical membrane-spanning segments follow: residues 34-54 (GIGGLLFGYNTGVIAGALLYI), 69-89 (EIIVSMTVAGAIVGAAIGGWY), 104-124 (VLFLLGALVMVIAHAPWVIIL), 127-147 (LLVGFGVGMASMTSPLYISEM), 161-181 (GLLITGGQFLSYLINLAFVHT), 187-207 (WMLGVSAIPAIIQFCLMLTLP), 289-309 (FVGINTVMYYSPTILQFAGYA), 316-336 (ALALITSGLNAVGSVVSMMFV), 344-364 (LMIISMFGIITCLVILAAVFN), 455-475 (FGYLAIVFLGLYIIVYAPGMG), 493-513 (LAGGIAAVSNWMSNLVVSETF), and 524-544 (GTFLLFAGSSAVGLFFIWLLV).

This sequence belongs to the major facilitator superfamily. Sugar transporter (TC 2.A.1.1) family.

It is found in the membrane. In terms of biological role, plasma membrane inositol-proton symporter. This chain is Probable inositol transporter 3 (INT3), found in Arabidopsis thaliana (Mouse-ear cress).